A 193-amino-acid polypeptide reads, in one-letter code: Ribosomal RNA large subunit methyltransferase E (193 aa).

5 residues coordinate S-adenosyl-L-methionine: Gly-51, Trp-53, Asp-69, Asp-85, and Asp-108. Lys-148 functions as the Proton acceptor in the catalytic mechanism.

Belongs to the class I-like SAM-binding methyltransferase superfamily. RNA methyltransferase RlmE family.

Its subcellular location is the cytoplasm. The catalysed reaction is uridine(2552) in 23S rRNA + S-adenosyl-L-methionine = 2'-O-methyluridine(2552) in 23S rRNA + S-adenosyl-L-homocysteine + H(+). Functionally, specifically methylates the uridine in position 2552 of 23S rRNA at the 2'-O position of the ribose in the fully assembled 50S ribosomal subunit. The chain is Ribosomal RNA large subunit methyltransferase E from Methanoregula boonei (strain DSM 21154 / JCM 14090 / 6A8).